Reading from the N-terminus, the 212-residue chain is Large ribosomal subunit protein uL3 (212 aa).

Residues 127 to 153 form a disordered region; it reads FRGGPATHGQSDRHRAPGSIGSGTTPG.

This sequence belongs to the universal ribosomal protein uL3 family. In terms of assembly, part of the 50S ribosomal subunit. Forms a cluster with proteins L14 and L19.

Its function is as follows. One of the primary rRNA binding proteins, it binds directly near the 3'-end of the 23S rRNA, where it nucleates assembly of the 50S subunit. In Herpetosiphon aurantiacus (strain ATCC 23779 / DSM 785 / 114-95), this protein is Large ribosomal subunit protein uL3.